The sequence spans 321 residues: tRNA U34 carboxymethyltransferase (321 aa).

Carboxy-S-adenosyl-L-methionine contacts are provided by residues K90, W104, K109, G129, 151 to 153, 180 to 181, M195, Y199, and R314; these read DPT and IE.

Belongs to the class I-like SAM-binding methyltransferase superfamily. CmoB family. Homotetramer.

The catalysed reaction is carboxy-S-adenosyl-L-methionine + 5-hydroxyuridine(34) in tRNA = 5-carboxymethoxyuridine(34) in tRNA + S-adenosyl-L-homocysteine + H(+). In terms of biological role, catalyzes carboxymethyl transfer from carboxy-S-adenosyl-L-methionine (Cx-SAM) to 5-hydroxyuridine (ho5U) to form 5-carboxymethoxyuridine (cmo5U) at position 34 in tRNAs. This chain is tRNA U34 carboxymethyltransferase, found in Haemophilus influenzae (strain 86-028NP).